The primary structure comprises 79 residues: Large ribosomal subunit protein bL28 (79 aa).

This sequence belongs to the bacterial ribosomal protein bL28 family.

In Christiangramia forsetii (strain DSM 17595 / CGMCC 1.15422 / KT0803) (Gramella forsetii), this protein is Large ribosomal subunit protein bL28.